Reading from the N-terminus, the 474-residue chain is MSNKISETLTFECETGNYHTFCPISCVAWLYQKIEDSFFLVVGTKTCGYFLQNALGVMIFAEPRYAMAELEEGDISAQLNDYKELKRLCLQIKKDRNPSVIIWIGTCTTEIIKMDLEGMAPKLENELGIPIVVARANGLDYAFTQGEDTVLAAMAHRCPEQNTLLDNKKVIQQDSTIQDFFSFLSLEKKEETRNNSSIKSKKHPPLVLFGSLPSTVASQLSSELKRQSVQVSGWLPAQRYTDLPSLGDQVYVCGVNPFLSRTATTLMRRRKCKLIGAPFPIGPDGTRAWIEKICSVFNIKTKDLEQREQQIWENLKDYLDLVRGKSVFFMGDNLLEISLARFLIRCGMIVYEIGIPYLDKRYQAAELLFLQNTCKSMGIPMPRIVEKPDNYNQIQRMRELQPDLAITGMAHANPLEARGINTKWSVEFTFAQIHGFTNARDVLELVTRPLRRNNNLENLGWNDLTKKEKQIKFN.

Positions 22, 47, and 107 each coordinate [4Fe-4S] cluster.

The protein belongs to the BchN/ChlN family. As to quaternary structure, protochlorophyllide reductase is composed of three subunits; ChlL, ChlN and ChlB. Forms a heterotetramer of two ChlB and two ChlN subunits. It depends on [4Fe-4S] cluster as a cofactor.

It is found in the plastid. It localises to the chloroplast. It catalyses the reaction chlorophyllide a + oxidized 2[4Fe-4S]-[ferredoxin] + 2 ADP + 2 phosphate = protochlorophyllide a + reduced 2[4Fe-4S]-[ferredoxin] + 2 ATP + 2 H2O. Its pathway is porphyrin-containing compound metabolism; chlorophyll biosynthesis (light-independent). Its function is as follows. Component of the dark-operative protochlorophyllide reductase (DPOR) that uses Mg-ATP and reduced ferredoxin to reduce ring D of protochlorophyllide (Pchlide) to form chlorophyllide a (Chlide). This reaction is light-independent. The NB-protein (ChlN-ChlB) is the catalytic component of the complex. The polypeptide is Light-independent protochlorophyllide reductase subunit N (Physcomitrium patens (Spreading-leaved earth moss)).